Reading from the N-terminus, the 776-residue chain is Chitin synthase 1 (776 aa).

Helical transmembrane passes span 451–471, 487–507, 523–543, 558–578, 695–714, and 723–743; these read LVSL…FYFL, FWIF…LFIV, LIIL…VFVI, VLVS…LMSI, VVLF…VQVY, and IYLA…AIGS.

The protein belongs to the chitin synthase family.

It is found in the cell membrane. The enzyme catalyses [(1-&gt;4)-N-acetyl-beta-D-glucosaminyl](n) + UDP-N-acetyl-alpha-D-glucosamine = [(1-&gt;4)-N-acetyl-beta-D-glucosaminyl](n+1) + UDP + H(+). Its activity is regulated as follows. Requires proteolytic activation. Its function is as follows. Polymerizes chitin, a structural polymer of the cell wall and septum, by transferring the sugar moiety of UDP-GlcNAc to the non-reducing end of the growing chitin polymer. Also involved in forming cross walls in the hyphal phase. This is Chitin synthase 1 (CHS1) from Candida albicans (Yeast).